The chain runs to 338 residues: Fe(3+)-binding periplasmic protein (338 aa).

The first 26 residues, 1 to 26 (MKLRISSLGPVALLASSMMLAFGAQA), serve as a signal peptide directing secretion. Residues H40, E88, Y224, and Y225 each contribute to the Fe cation site.

The protein belongs to the bacterial solute-binding protein 1 family. In terms of assembly, the complex is composed of two ATP-binding proteins (FbpC), two transmembrane proteins (FbpB) and a solute-binding protein (FbpA).

Its subcellular location is the periplasm. Functionally, part of the ABC transporter complex FbpABC (TC 3.A.1.10.1) involved in Fe(3+) ions import. This protein specifically binds Fe(3+) and is involved in its transmembrane transport. This chain is Fe(3+)-binding periplasmic protein (fbpA), found in Serratia marcescens.